A 75-amino-acid chain; its full sequence is Brevinin-2HS2A (75 aa).

An N-terminal signal peptide occupies residues 1–22 (MFTLKKPLLLLFFLGTISLSLC). Positions 23–40 (QEERDADEEEGEMIEEEV) are excised as a propeptide. Cysteines 69 and 75 form a disulfide.

The protein belongs to the frog skin active peptide (FSAP) family. Brevinin subfamily. Expressed by the skin glands.

Its subcellular location is the secreted. Functionally, has antimicrobial activity against some Gram-positive bacteria and fungi but has no activity against a range of Gram-negative bacteria except P.faecalis. Has antimicrobial activity against the Gram-positive bacteria S.aureus ATCC 25923 (MIC=19 uM), B.licheniformis X39 (MIC=37.5 uM) and R.rhodochrous X15 (MIC=9.5 uM), is virtually inactive against E.faecium 091299 (MIC=150 uM) and S.carnosus KHS (MIC=150 uM) and inactive against E.faecalis 981. Active against the Gram-negative bacterium P.faecalis X29 (MIC=9.5 uM) and is inactive against E.coli, P.aeruginosa and S.typhi. Active against C.albicans ATCC 2002 (MIC=19 uM) and is also active against the slime mold 090223 (MIC=37.5 uM). Has extremely low hemolytic activity against human erythrocytes (LC(50)=300 uM). This Odorrana hainanensis (Odor frog) protein is Brevinin-2HS2A.